We begin with the raw amino-acid sequence, 481 residues long: Cysteine--tRNA ligase (481 aa).

Residue cysteine 43 coordinates Zn(2+). The 'HIGH' region signature appears at 45–55 (ATVQGLPHIGH). Zn(2+)-binding residues include cysteine 221, histidine 246, and glutamate 250. Positions 277–281 (KMSKS) match the 'KMSKS' region motif. Lysine 280 contributes to the ATP binding site.

The protein belongs to the class-I aminoacyl-tRNA synthetase family. As to quaternary structure, monomer. Requires Zn(2+) as cofactor.

It is found in the cytoplasm. The enzyme catalyses tRNA(Cys) + L-cysteine + ATP = L-cysteinyl-tRNA(Cys) + AMP + diphosphate. The chain is Cysteine--tRNA ligase from Mycobacterium sp. (strain KMS).